The sequence spans 1012 residues: Structural polyprotein (1012 aa).

Asp30 provides a ligand contact to a divalent metal cation. The Peptidase S50 domain maps to Ala514 to Ala755. The active-site Nucleophile is Ser653. Lys692 is a catalytic residue. The interval Met972–Glu1012 is disordered. Residues Arg975 to Pro986 are compositionally biased toward basic residues. Residues Ile1003–Glu1012 are interaction with VP1 protein.

In terms of assembly, homotrimer. A central divalent metal stabilizes the VP2 trimer. Interacts with host ITGA4/ITGB1. Homodimer. Interacts (via C-terminus) with VP1 in the cytoplasm. Interacts with VP2. Specific enzymatic cleavages yield mature proteins. The capsid assembly seems to be regulated by polyprotein processing. The protease VP4 cleaves itself off the polyprotein, thus releasing pre-VP2 and VP3 within the infected cell. During capsid assembly, the C-terminus of pre-VP2 is further processed by VP4, giving rise to VP2, the external capsid protein and three small peptides that all stay closely associated with the capsid.

It is found in the virion. Its subcellular location is the host cytoplasm. In terms of biological role, capsid protein VP2 self assembles to form an icosahedral capsid with a T=13 symmetry, about 70 nm in diameter, and consisting of 260 VP2 trimers. The capsid encapsulates the genomic dsRNA. VP2 is also involved in attachment and entry into the host cell by interacting with host ITGA4/ITGB1. Functionally, the precursor of VP2 plays an important role in capsid assembly. First, pre-VP2 and VP2 oligomers assemble to form a procapsid. Then, the pre-VP2 intermediates may be processed into VP2 proteins by proteolytic cleavage mediated by VP4 to obtain the mature virion. The final capsid is composed of pentamers and hexamers but VP2 has a natural tendency to assemble into all-pentameric structures. Therefore pre-VP2 may be required to allow formation of the hexameric structures. Its function is as follows. Protease VP4 is a serine protease that cleaves the polyprotein into its final products. Pre-VP2 is first partially cleaved, and may be completely processed by VP4 upon capsid maturation. Capsid protein VP3 plays a key role in virion assembly by providing a scaffold for the capsid made of VP2. May self-assemble to form a T=4-like icosahedral inner-capsid composed of at least 180 trimers. Plays a role in genomic RNA packaging by recruiting VP1 into the capsid and interacting with the dsRNA genome segments to form a ribonucleoprotein complex. Additionally, the interaction of the VP3 C-terminal tail with VP1 removes the inherent structural blockade of the polymerase active site. Thus, VP3 can also function as a transcriptional activator. In terms of biological role, structural peptide 1 is a small peptide derived from pre-VP2 C-terminus. It destabilizes and perforates cell membranes, suggesting a role during entry. Functionally, structural peptide 2 is a small peptide derived from pVP2 C-terminus. It is not essential for the virus viability, but viral growth is affected when missing. Its function is as follows. Structural peptide 3 is a small peptide derived from pVP2 C-terminus. It is not essential for the virus viability, but viral growth is affected when missing. Structural peptide 4 is a small peptide derived from pVP2 C-terminus. It is essential for the virus viability. This Gallus gallus (Chicken) protein is Structural polyprotein.